Here is a 138-residue protein sequence, read N- to C-terminus: Phospholipase A2 homolog 1 (138 aa).

Positions 1–16 (MRTLWIMAVLLVGVEG) are cleaved as a signal peptide. Disulfide bonds link Cys-42–Cys-132, Cys-44–Cys-60, Cys-59–Cys-111, Cys-65–Cys-138, Cys-66–Cys-104, Cys-73–Cys-97, and Cys-91–Cys-102. An important for membrane-damaging activities in eukaryotes and bacteria; heparin-binding region spans residues 121-134 (KKYKNNYLKPFCKK).

The protein belongs to the phospholipase A2 family. Group II subfamily. K49 sub-subfamily. Homodimer; non-covalently linked (probable alternative/compact dimer conformation in solution). In terms of tissue distribution, expressed by the venom gland.

Its subcellular location is the secreted. Snake venom phospholipase A2 homolog that lacks enzymatic and anticoagulant activities. In mice, it induces conspicuous local myonecrosis, edema, and a systemic interleukin-6 response. In vitro, it is cytolytic upon myoblasts, and weakly bactericidal. A model of myotoxic mechanism has been proposed: an apo Lys49-PLA2 is activated by the entrance of a hydrophobic molecule (e.g. fatty acid) at the hydrophobic channel of the protein leading to a reorientation of a monomer. This reorientation causes a transition between 'inactive' to 'active' states, causing alignment of C-terminal and membrane-docking sites (MDoS) side-by-side and putting the membrane-disruption sites (MDiS) in the same plane, exposed to solvent and in a symmetric position for both monomers. The MDoS region stabilizes the toxin on membrane by the interaction of charged residues with phospholipid head groups. Subsequently, the MDiS region destabilizes the membrane with penetration of hydrophobic residues. This insertion causes a disorganization of the membrane, allowing an uncontrolled influx of ions (i.e. calcium and sodium), and eventually triggering irreversible intracellular alterations and cell death. The protein is Phospholipase A2 homolog 1 of Bothrops atrox (Barba amarilla).